Reading from the N-terminus, the 145-residue chain is uncharacterized protein (145 aa).

Residues 1-145 (LQYRAADTNA…NGQIVWGTAP (145 aa)) enclose the CBM3 domain.

This is an uncharacterized protein from Paenibacillus lautus (Bacillus lautus).